Here is a 731-residue protein sequence, read N- to C-terminus: E3 ubiquitin-protein ligase SMURF1 (731 aa).

The C2 domain occupies 1–120 (MSNVVTRRGG…TGYQRLDLCK (120 aa)). The segment at 210-235 (RVRGPEVREHVQTPQNRSHGFQSQDL) is disordered. Over residues 221–234 (QTPQNRSHGFQSQD) the composition is skewed to polar residues. 2 WW domains span residues 233–266 (QDLPEGYEQRTTVQGQVYFLHTQTGVSTWHDPRI) and 279–312 (GSLPAGWEVRTTVSGRIYFVDHNNRTTQFTDPRL). In terms of domain architecture, HECT spans 394–731 (RPKDLKKRLM…VEETSGFAVE (338 aa)). The Glycyl thioester intermediate role is filled by cysteine 699.

It is found in the cytoplasm. It localises to the cell membrane. It catalyses the reaction S-ubiquitinyl-[E2 ubiquitin-conjugating enzyme]-L-cysteine + [acceptor protein]-L-lysine = [E2 ubiquitin-conjugating enzyme]-L-cysteine + N(6)-ubiquitinyl-[acceptor protein]-L-lysine.. The protein operates within protein modification; protein ubiquitination. E3 ubiquitin-protein ligase that acts as a negative regulator of BMP signaling pathway. Mediates ubiquitination and degradation of smad1 and smad5, 2 receptor-regulated SMADs specific for the BMP pathway. Promotes ubiquitination and subsequent proteasomal degradation of TRAF family members and rhoa. May play a role in dendrite formation by melanocytes. This is E3 ubiquitin-protein ligase SMURF1 (smurf1) from Xenopus laevis (African clawed frog).